The sequence spans 119 residues: Integration host factor subunit alpha (119 aa).

Positions 96 to 119 are disordered; it reads INGQQANGKMNGESAPSEFSAETE.

It belongs to the bacterial histone-like protein family. In terms of assembly, heterodimer of an alpha and a beta chain.

Functionally, this protein is one of the two subunits of integration host factor, a specific DNA-binding protein that functions in genetic recombination as well as in transcriptional and translational control. This is Integration host factor subunit alpha from Bradyrhizobium sp. (strain ORS 278).